A 142-amino-acid polypeptide reads, in one-letter code: Hemoglobin subunit alpha-A (142 aa).

The region spanning 2-142 (VLSAADKNNV…VGTVLTAKYR (141 aa)) is the Globin domain. Histidine 59 provides a ligand contact to O2. Position 88 (histidine 88) interacts with heme b.

Belongs to the globin family. In terms of assembly, heterotetramer of two alpha chains and two beta chains. As to expression, red blood cells.

Involved in oxygen transport from the lung to the various peripheral tissues. This chain is Hemoglobin subunit alpha-A (HBAA), found in Meleagris gallopavo (Wild turkey).